A 640-amino-acid chain; its full sequence is MPTITLPDGSQRAFDHAVSVADVAASIGAGLAKATVAGKVDGKLVDACELITHDATLQIITPKDEEGLEIIRHSCAHLVGHAVKQLYPTAKMVIGPVIDEGFYYDIAYERSFTPEDLAAIEKRMQQLIEKDYDVIKKMTPRAEVIDVFKARGEDYKLRLVEDMPDEQAMGLYYHEEYVDMCRGPHVPNTRFLKAFKLTKLSGAYWRGDAKNEQLQRVYGTAWADKKQLAAYIQRIEEAEKRDHRKIGKQLDLFHLQEEAPGMVFWHANGWTVYQVLEQYMRQVQRENGYSEIKTPQVVDRILWERSGHWSNYAENMFTTSSESRDYAVKPMNCPCHVQVFNQGLKSYRDLPLRLAEFGACHRNEPSGALHGIMRVRGFVQDDAHIFCTEDQVKKEAADFIKLTLDVYKDFGFTDVAMKLSTRPAKRVGSEELWDRAEGALADALNESGLEWEYQPGEGAFYGPKIEFTLRDCLGRNWQCGTLQYDPNLPERLDASYIAEDNARKRPVMLHRAILGSFERFIGMLIEHYAGVFPAWLAPTQAVIMNITDKQADFALQVEKSLNGSGFRAKSDLRNEKIGFKIREHTLLKVPYLLVIGDREVETQTVAVRTREGADLGSMPVAQFVELLTHAVSRRGRQESE.

Residues Met1–Thr61 form the TGS domain. Positions Asp242–Pro533 are catalytic. Zn(2+) contacts are provided by Cys333, His384, and His510.

This sequence belongs to the class-II aminoacyl-tRNA synthetase family. In terms of assembly, homodimer. It depends on Zn(2+) as a cofactor.

The protein resides in the cytoplasm. It catalyses the reaction tRNA(Thr) + L-threonine + ATP = L-threonyl-tRNA(Thr) + AMP + diphosphate + H(+). Functionally, catalyzes the attachment of threonine to tRNA(Thr) in a two-step reaction: L-threonine is first activated by ATP to form Thr-AMP and then transferred to the acceptor end of tRNA(Thr). Also edits incorrectly charged L-seryl-tRNA(Thr). In Pseudomonas putida (strain W619), this protein is Threonine--tRNA ligase.